Here is a 370-residue protein sequence, read N- to C-terminus: Neutral protease 2 homolog AFUA_4G13750 (370 aa).

Residues 1–19 (MKVTILASAILALINGALA) form the signal peptide. The propeptide occupies 20–172 (LPANTPTLDV…PQAIKLLDRR (153 aa)). 2 disulfide bridges follow: C178–C250 and C257–C275. H300 is a binding site for Zn(2+). E301 is a catalytic residue. Positions 304 and 315 each coordinate Zn(2+).

It belongs to the peptidase M35 family. Requires Zn(2+) as cofactor.

The protein resides in the secreted. It catalyses the reaction Preferential cleavage of bonds with hydrophobic residues in P1'. Also 3-Asn-|-Gln-4 and 8-Gly-|-Ser-9 bonds in insulin B chain.. Its function is as follows. Secreted metalloproteinase that allows assimilation of proteinaceous substrates. Shows high activities on basic nuclear substrates such as histone and protamine. May be involved in virulence. This Aspergillus fumigatus (strain ATCC MYA-4609 / CBS 101355 / FGSC A1100 / Af293) (Neosartorya fumigata) protein is Neutral protease 2 homolog AFUA_4G13750.